A 424-amino-acid chain; its full sequence is Histidine--tRNA ligase (424 aa).

The protein belongs to the class-II aminoacyl-tRNA synthetase family. In terms of assembly, homodimer.

Its subcellular location is the cytoplasm. It catalyses the reaction tRNA(His) + L-histidine + ATP = L-histidyl-tRNA(His) + AMP + diphosphate + H(+). The sequence is that of Histidine--tRNA ligase from Shigella dysenteriae serotype 1 (strain Sd197).